Reading from the N-terminus, the 466-residue chain is Glutamate--tRNA ligase (466 aa).

Positions 10-20 (PSPTGALHIGG) match the 'HIGH' region motif. Residues C99, C101, C126, and D128 each coordinate Zn(2+). The 'KMSKS' region signature appears at 239-243 (KLSKR). An ATP-binding site is contributed by K242.

This sequence belongs to the class-I aminoacyl-tRNA synthetase family. Glutamate--tRNA ligase type 1 subfamily. Monomer. It depends on Zn(2+) as a cofactor.

It localises to the cytoplasm. The catalysed reaction is tRNA(Glu) + L-glutamate + ATP = L-glutamyl-tRNA(Glu) + AMP + diphosphate. In terms of biological role, catalyzes the attachment of glutamate to tRNA(Glu) in a two-step reaction: glutamate is first activated by ATP to form Glu-AMP and then transferred to the acceptor end of tRNA(Glu). This is Glutamate--tRNA ligase from Pelagibacter ubique (strain HTCC1062).